A 98-amino-acid chain; its full sequence is Beta-elicitin cinnamomin (98 aa).

Disulfide bonds link Cys3-Cys71, Cys27-Cys56, and Cys51-Cys95. The short motif at 33–42 (YSMLTATALP) is the Beak-like motif 1 (ligand binding) element. The Beak-like motif 2 (ligand binding) motif lies at 72-83 (DLTVPTSGLVLD).

It belongs to the elicitin family.

The protein localises to the secreted. Functionally, induces local and distal defense responses (incompatible hypersensitive reaction) in plants from the solanaceae and cruciferae families. Elicits leaf necrosis and causes the accumulation of pathogenesis-related proteins. Might interact with the lipidic molecules of the plasma membrane. Elicitins are able to load, carry, and transfer sterols between membranes. In Phytophthora cinnamomi (Cinnamon fungus), this protein is Beta-elicitin cinnamomin.